The sequence spans 207 residues: Large ribosomal subunit protein uL4 (207 aa).

The disordered stretch occupies residues 49 to 78 (HAVKNRSAVSGGGRKPWRQKGTGRARQGSI).

This sequence belongs to the universal ribosomal protein uL4 family. In terms of assembly, part of the 50S ribosomal subunit.

In terms of biological role, one of the primary rRNA binding proteins, this protein initially binds near the 5'-end of the 23S rRNA. It is important during the early stages of 50S assembly. It makes multiple contacts with different domains of the 23S rRNA in the assembled 50S subunit and ribosome. Its function is as follows. Forms part of the polypeptide exit tunnel. This chain is Large ribosomal subunit protein uL4, found in Streptococcus thermophilus (strain CNRZ 1066).